Reading from the N-terminus, the 117-residue chain is Small ribosomal subunit protein uS17 (117 aa).

It belongs to the universal ribosomal protein uS17 family. As to quaternary structure, part of the 30S ribosomal subunit.

One of the primary rRNA binding proteins, it binds specifically to the 5'-end of 16S ribosomal RNA. The chain is Small ribosomal subunit protein uS17 from Methanocaldococcus jannaschii (strain ATCC 43067 / DSM 2661 / JAL-1 / JCM 10045 / NBRC 100440) (Methanococcus jannaschii).